The following is a 349-amino-acid chain: DNA polymerase IV (349 aa).

The UmuC domain maps to 7-188 (IIHIDMDYFF…LPVKKLFGVG (182 aa)). Mg(2+) is bound by residues Asp-11 and Asp-106. The active site involves Glu-107.

This sequence belongs to the DNA polymerase type-Y family. In terms of assembly, monomer. Requires Mg(2+) as cofactor.

The protein resides in the cytoplasm. The enzyme catalyses DNA(n) + a 2'-deoxyribonucleoside 5'-triphosphate = DNA(n+1) + diphosphate. In terms of biological role, poorly processive, error-prone DNA polymerase involved in untargeted mutagenesis. Copies undamaged DNA at stalled replication forks, which arise in vivo from mismatched or misaligned primer ends. These misaligned primers can be extended by PolIV. Exhibits no 3'-5' exonuclease (proofreading) activity. May be involved in translesional synthesis, in conjunction with the beta clamp from PolIII. This chain is DNA polymerase IV, found in Francisella tularensis subsp. novicida (strain U112).